Reading from the N-terminus, the 159-residue chain is 3-hydroxyacyl-[acyl-carrier-protein] dehydratase FabZ (159 aa).

Histidine 58 is an active-site residue.

It belongs to the thioester dehydratase family. FabZ subfamily.

It localises to the cytoplasm. It catalyses the reaction a (3R)-hydroxyacyl-[ACP] = a (2E)-enoyl-[ACP] + H2O. Functionally, involved in unsaturated fatty acids biosynthesis. Catalyzes the dehydration of short chain beta-hydroxyacyl-ACPs and long chain saturated and unsaturated beta-hydroxyacyl-ACPs. The protein is 3-hydroxyacyl-[acyl-carrier-protein] dehydratase FabZ of Helicobacter pylori (strain Shi470).